Consider the following 52-residue polypeptide: Metchnikowin (52 aa).

An N-terminal signal peptide occupies residues 1–24; sequence MQLNLGAIFLALLGVMATATSVLA. A propeptide spanning residues 25–26 is cleaved from the precursor; the sequence is EP. The disordered stretch occupies residues 28 to 52; sequence RHQGPIFDTRPSPFNPNQPRPGPIY. Pro residues predominate over residues 40-52; it reads PFNPNQPRPGPIY.

In terms of tissue distribution, hemolymph (at protein level). Highest expression in fat body.

It localises to the secreted. In terms of biological role, potent antifungal and antibacterial activity against Gram-positive bacteria. This is Metchnikowin (Mtk) from Drosophila melanogaster (Fruit fly).